A 243-amino-acid chain; its full sequence is Ribonuclease PH (243 aa).

Phosphate contacts are provided by residues R91 and 129–131 (GTR).

This sequence belongs to the RNase PH family. As to quaternary structure, homohexameric ring arranged as a trimer of dimers.

It catalyses the reaction tRNA(n+1) + phosphate = tRNA(n) + a ribonucleoside 5'-diphosphate. Functionally, phosphorolytic 3'-5' exoribonuclease that plays an important role in tRNA 3'-end maturation. Removes nucleotide residues following the 3'-CCA terminus of tRNAs; can also add nucleotides to the ends of RNA molecules by using nucleoside diphosphates as substrates, but this may not be physiologically important. Probably plays a role in initiation of 16S rRNA degradation (leading to ribosome degradation) during starvation. This chain is Ribonuclease PH, found in Burkholderia lata (strain ATCC 17760 / DSM 23089 / LMG 22485 / NCIMB 9086 / R18194 / 383).